A 333-amino-acid chain; its full sequence is Phosphate acyltransferase (333 aa).

The protein belongs to the PlsX family. In terms of assembly, homodimer. Probably interacts with PlsY.

It localises to the cytoplasm. The enzyme catalyses a fatty acyl-[ACP] + phosphate = an acyl phosphate + holo-[ACP]. It participates in lipid metabolism; phospholipid metabolism. Catalyzes the reversible formation of acyl-phosphate (acyl-PO(4)) from acyl-[acyl-carrier-protein] (acyl-ACP). This enzyme utilizes acyl-ACP as fatty acyl donor, but not acyl-CoA. This is Phosphate acyltransferase from Enterococcus faecalis (strain ATCC 700802 / V583).